We begin with the raw amino-acid sequence, 657 residues long: Glycogen debranching enzyme (657 aa).

The Nucleophile role is filled by D336. E371 acts as the Proton donor in catalysis. The tract at residues 460 to 479 is disordered; sequence ANGEENRDGTNNNHSFNHGI.

The protein belongs to the glycosyl hydrolase 13 family.

The catalysed reaction is Hydrolysis of (1-&gt;6)-alpha-D-glucosidic linkages to branches with degrees of polymerization of three or four glucose residues in limit dextrin.. It functions in the pathway glycan degradation; glycogen degradation. Functionally, removes maltotriose and maltotetraose chains that are attached by 1,6-alpha-linkage to the limit dextrin main chain, generating a debranched limit dextrin. This Enterobacter sp. (strain 638) protein is Glycogen debranching enzyme.